Here is a 200-residue protein sequence, read N- to C-terminus: GTP cyclohydrolase-2 (200 aa).

Residue 49-53 (RVHSE) coordinates GTP. Zn(2+) is bound by residues cysteine 54, cysteine 65, and cysteine 67. Residues glutamine 70, 92–94 (EGR), and threonine 114 each bind GTP. Aspartate 126 (proton acceptor) is an active-site residue. Residue arginine 128 is the Nucleophile of the active site. The GTP site is built by threonine 149 and lysine 154.

It belongs to the GTP cyclohydrolase II family. Homodimer. Requires Zn(2+) as cofactor.

The catalysed reaction is GTP + 4 H2O = 2,5-diamino-6-hydroxy-4-(5-phosphoribosylamino)-pyrimidine + formate + 2 phosphate + 3 H(+). The protein operates within cofactor biosynthesis; riboflavin biosynthesis; 5-amino-6-(D-ribitylamino)uracil from GTP: step 1/4. Functionally, catalyzes the conversion of GTP to 2,5-diamino-6-ribosylamino-4(3H)-pyrimidinone 5'-phosphate (DARP), formate and pyrophosphate. The polypeptide is GTP cyclohydrolase-2 (Klebsiella pneumoniae subsp. pneumoniae (strain ATCC 700721 / MGH 78578)).